The following is a 435-amino-acid chain: Methylenetetrahydrofolate--tRNA-(uracil-5-)-methyltransferase TrmFO (435 aa).

9–14 (GAGLAG) contacts FAD.

It belongs to the MnmG family. TrmFO subfamily. The cofactor is FAD.

It is found in the cytoplasm. The catalysed reaction is uridine(54) in tRNA + (6R)-5,10-methylene-5,6,7,8-tetrahydrofolate + NADH + H(+) = 5-methyluridine(54) in tRNA + (6S)-5,6,7,8-tetrahydrofolate + NAD(+). It catalyses the reaction uridine(54) in tRNA + (6R)-5,10-methylene-5,6,7,8-tetrahydrofolate + NADPH + H(+) = 5-methyluridine(54) in tRNA + (6S)-5,6,7,8-tetrahydrofolate + NADP(+). Functionally, catalyzes the folate-dependent formation of 5-methyl-uridine at position 54 (M-5-U54) in all tRNAs. This is Methylenetetrahydrofolate--tRNA-(uracil-5-)-methyltransferase TrmFO from Staphylococcus saprophyticus subsp. saprophyticus (strain ATCC 15305 / DSM 20229 / NCIMB 8711 / NCTC 7292 / S-41).